A 362-amino-acid polypeptide reads, in one-letter code: 3-dehydroquinate synthase (362 aa).

Residues 71-76 (DGEQYK), 105-109 (GVIGD), 129-130 (TT), lysine 142, lysine 151, and 169-172 (CLST) contribute to the NAD(+) site. Zn(2+)-binding residues include glutamate 184, histidine 247, and histidine 264.

It belongs to the sugar phosphate cyclases superfamily. Dehydroquinate synthase family. Co(2+) is required as a cofactor. Requires Zn(2+) as cofactor. The cofactor is NAD(+).

It is found in the cytoplasm. It carries out the reaction 7-phospho-2-dehydro-3-deoxy-D-arabino-heptonate = 3-dehydroquinate + phosphate. It functions in the pathway metabolic intermediate biosynthesis; chorismate biosynthesis; chorismate from D-erythrose 4-phosphate and phosphoenolpyruvate: step 2/7. Its function is as follows. Catalyzes the conversion of 3-deoxy-D-arabino-heptulosonate 7-phosphate (DAHP) to dehydroquinate (DHQ). The chain is 3-dehydroquinate synthase from Vibrio atlanticus (strain LGP32) (Vibrio splendidus (strain Mel32)).